Reading from the N-terminus, the 201-residue chain is Histidine biosynthesis bifunctional protein HisIE (201 aa).

The segment at 1–114 (MLTAQQIEKL…FAPAQTEWGF (114 aa)) is phosphoribosyl-AMP cyclohydrolase. The interval 115–201 (LYQLEKLLAS…SCVIRRLRER (87 aa)) is phosphoribosyl-ATP pyrophosphohydrolase.

The protein in the N-terminal section; belongs to the PRA-CH family. In the C-terminal section; belongs to the PRA-PH family.

The protein resides in the cytoplasm. The enzyme catalyses 1-(5-phospho-beta-D-ribosyl)-ATP + H2O = 1-(5-phospho-beta-D-ribosyl)-5'-AMP + diphosphate + H(+). It carries out the reaction 1-(5-phospho-beta-D-ribosyl)-5'-AMP + H2O = 1-(5-phospho-beta-D-ribosyl)-5-[(5-phospho-beta-D-ribosylamino)methylideneamino]imidazole-4-carboxamide. It participates in amino-acid biosynthesis; L-histidine biosynthesis; L-histidine from 5-phospho-alpha-D-ribose 1-diphosphate: step 2/9. Its pathway is amino-acid biosynthesis; L-histidine biosynthesis; L-histidine from 5-phospho-alpha-D-ribose 1-diphosphate: step 3/9. This chain is Histidine biosynthesis bifunctional protein HisIE, found in Photorhabdus laumondii subsp. laumondii (strain DSM 15139 / CIP 105565 / TT01) (Photorhabdus luminescens subsp. laumondii).